The sequence spans 435 residues: Galactomannan galactosyltransferase 1 (435 aa).

Residues methionine 1–phenylalanine 20 are Cytoplasmic-facing. The chain crosses the membrane as a helical; Signal-anchor for type II membrane protein span at residues leucine 21–isoleucine 41. Residues proline 42 to alanine 435 lie on the Lumenal side of the membrane. N-linked (GlcNAc...) asparagine glycosylation is found at asparagine 230 and asparagine 328. A coiled-coil region spans residues glutamate 321 to lysine 354.

Belongs to the glycosyltransferase 34 family.

It is found in the golgi apparatus membrane. Galactomannan galactosyltransferase (GMGT) involved in galactomannan biosynthesis in seed endosperm. GMGT specificity is an important factor regulating the distribution and amount of alpha-1,6-galactose (Gal) substitution of the beta-1,4-linked mannan backbone. In Cyamopsis tetragonoloba (Guar), this protein is Galactomannan galactosyltransferase 1 (GMGT1).